Reading from the N-terminus, the 585-residue chain is Probable multidrug resistance ABC transporter ATP-binding/permease protein YheI (585 aa).

In terms of domain architecture, ABC transmembrane type-1 spans 19–304; that stretch reads YTIAIVLLLA…IGELINVMQR (286 aa). The next 6 helical transmembrane spans lie at 21–41, 57–77, 127–147, 149–169, 249–269, and 279–299; these read IAIV…KLLG, LLFY…MSYF, AVSL…MFMM, IFLT…IIPL, VKLL…FLVF, and VSFN…GELI. In terms of domain architecture, ABC transporter spans 337–572; the sequence is IVFSHVSFTY…NGWYREQYER (236 aa). ATP is bound at residue 371 to 378; sequence GKTGSGKT.

This sequence belongs to the ABC transporter superfamily. As to quaternary structure, heterodimer composed of YheH and YheI.

The protein resides in the cell membrane. Its activity is regulated as follows. Inhibited by ortho-vanadate. Its function is as follows. Involved in the transport of four structurally unrelated drugs, including doxorubicin and mitoxantrone. Transmembrane domains (TMD) form a pore in the membrane and the ATP-binding domain (NBD) is responsible for energy generation. The protein is Probable multidrug resistance ABC transporter ATP-binding/permease protein YheI (yheI) of Bacillus subtilis (strain 168).